The following is a 249-amino-acid chain: 15,16-dihydrobiliverdin:ferredoxin oxidoreductase (249 aa).

Belongs to the HY2 family.

The catalysed reaction is 15,16-dihydrobiliverdin + oxidized 2[4Fe-4S]-[ferredoxin] = biliverdin IXalpha + reduced 2[4Fe-4S]-[ferredoxin] + 2 H(+). Catalyzes the two-electron reduction of biliverdin IX-alpha at the C15 methine bridge. This is 15,16-dihydrobiliverdin:ferredoxin oxidoreductase from Prochlorococcus marinus (strain MIT 9303).